A 355-amino-acid polypeptide reads, in one-letter code: Phospho-N-acetylmuramoyl-pentapeptide-transferase (355 aa).

Transmembrane regions (helical) follow at residues 3–23 (GVLI…PWVI), 56–76 (VIIV…GIGF), 80–100 (GLLV…DDYI), 120–140 (AAVA…AGLL), 156–176 (VGII…SNAV), 185–205 (LAAG…FWQF), 224–244 (PLDV…FLWW), 251–271 (IFMG…IAIV), 276–296 (LLLV…MIQV), and 330–350 (FWIV…AEFL).

Belongs to the glycosyltransferase 4 family. MraY subfamily. Requires Mg(2+) as cofactor.

It localises to the cell membrane. The catalysed reaction is UDP-N-acetyl-alpha-D-muramoyl-L-alanyl-gamma-D-glutamyl-meso-2,6-diaminopimeloyl-D-alanyl-D-alanine + di-trans,octa-cis-undecaprenyl phosphate = di-trans,octa-cis-undecaprenyl diphospho-N-acetyl-alpha-D-muramoyl-L-alanyl-D-glutamyl-meso-2,6-diaminopimeloyl-D-alanyl-D-alanine + UMP. It participates in cell wall biogenesis; peptidoglycan biosynthesis. Its function is as follows. Catalyzes the initial step of the lipid cycle reactions in the biosynthesis of the cell wall peptidoglycan: transfers peptidoglycan precursor phospho-MurNAc-pentapeptide from UDP-MurNAc-pentapeptide onto the lipid carrier undecaprenyl phosphate, yielding undecaprenyl-pyrophosphoryl-MurNAc-pentapeptide, known as lipid I. The polypeptide is Phospho-N-acetylmuramoyl-pentapeptide-transferase (Frankia casuarinae (strain DSM 45818 / CECT 9043 / HFP020203 / CcI3)).